The following is a 321-amino-acid chain: Ribosomal RNA small subunit methyltransferase H (321 aa).

Residues 42-44 (GGH), Asp62, Phe86, Asp107, and Gln114 contribute to the S-adenosyl-L-methionine site.

This sequence belongs to the methyltransferase superfamily. RsmH family.

The protein localises to the cytoplasm. It carries out the reaction cytidine(1402) in 16S rRNA + S-adenosyl-L-methionine = N(4)-methylcytidine(1402) in 16S rRNA + S-adenosyl-L-homocysteine + H(+). In terms of biological role, specifically methylates the N4 position of cytidine in position 1402 (C1402) of 16S rRNA. In Herminiimonas arsenicoxydans, this protein is Ribosomal RNA small subunit methyltransferase H.